The primary structure comprises 528 residues: Beta-hexosaminidase subunit alpha (528 aa).

Residues 1–22 (MAGCRLWVSLLLAAALACLATA) form the signal peptide. A propeptide spanning residues 23–88 (LWPWPQYIQT…PRPSFSKKQQ (66 aa)) is cleaved from the precursor. C58 and C104 form a disulfide bridge. N-linked (GlcNAc...) asparagine glycans are attached at residues N115, N157, and N295. C277 and C328 are oxidised to a cystine. The Proton donor role is filled by E323. Residues 422-423 (NR) are critical for hydrolysis GM2 gangliosides. N487 is a glycosylation site (N-linked (GlcNAc...) asparagine). C504 and C521 are joined by a disulfide.

Belongs to the glycosyl hydrolase 20 family. There are 3 beta-hexosaminidase isozymes: isozyme A (hexosaminidase A) is a heterodimer composed of one subunit alpha and one subunit beta (chain A and B); isozyme B (hexosaminidase B) is a homodimer of two beta subunits (two chains A and B); isozyme S (hexosaminidase S) is a homodimer of two alpha subunits. The composition of the dimer (isozyme A versus isozyme S) has a significant effect on the substrate specificity of the alpha subunit active site.

It is found in the lysosome. It carries out the reaction Hydrolysis of terminal non-reducing N-acetyl-D-hexosamine residues in N-acetyl-beta-D-hexosaminides.. It catalyses the reaction N-acetyl-beta-D-galactosaminyl-(1-&gt;4)-beta-D-3-sulfogalactosyl-(1-&gt;4)-beta-D-glucosyl-(1&lt;-&gt;1')-ceramide + H2O = a beta-D-3-sulfogalactosyl-(1-&gt;4)-beta-D-glucosyl-(1&lt;-&gt;1')-ceramide + N-acetyl-beta-D-galactosamine. The enzyme catalyses a ganglioside GM2 (d18:1(4E)) + H2O = a ganglioside GM3 (d18:1(4E)) + N-acetyl-beta-D-galactosamine. The catalysed reaction is a ganglioside GM2 + H2O = a ganglioside GM3 + N-acetyl-beta-D-galactosamine. It carries out the reaction beta-D-GalNAc-(1-&gt;4)-alpha-L-IdoA-(1-&gt;3)-beta-D-GalNAc-4-sulfate-(1-&gt;4)-alpha-L-IdoA-(1-&gt;3)-D-GalNAc-4-sulfate + H2O = alpha-L-IdoA-(1-&gt;3)-beta-D-GalNAc-4-sulfate-(1-&gt;4)-alpha-L-IdoA-(1-&gt;3)-D-GalNAc-4-sulfate + N-acetyl-D-galactosamine. It catalyses the reaction N-acetyl-beta-D-6-sulfogalactosaminyl-(1-&gt;4)-alpha-L-iduronyl-(1-&gt;3)-N-acetyl-D-6-sulfogalactosamine + H2O = alpha-L-iduronyl-(1-&gt;3)-N-acetyl-D-6-sulfogalactosamine + N-acetyl-D-6-sulfogalactosamine. Addition of GM2A stimulates the hydrolysis of sulfated glycosphingolipid SM2 and the ganglioside GM2. Its function is as follows. Hydrolyzes the non-reducing end N-acetyl-D-hexosamine and/or sulfated N-acetyl-D-hexosamine of glycoconjugates, such as the oligosaccharide moieties from proteins and neutral glycolipids, or from certain mucopolysaccharides. The isozyme S is as active as the isozyme A on the anionic bis-sulfated glycans, the chondroitin-6-sulfate trisaccharide (C6S-3), and the dermatan sulfate pentasaccharide, and the sulfated glycosphingolipid SM2. The isozyme B does not hydrolyze each of these substrates, however hydrolyzes efficiently neutral oligosaccharide. Only the isozyme A is responsible for the degradation of GM2 gangliosides in the presence of GM2A. The polypeptide is Beta-hexosaminidase subunit alpha (Rattus norvegicus (Rat)).